Reading from the N-terminus, the 335-residue chain is Pyridoxal 5'-phosphate synthase subunit PdxS (335 aa).

Aspartate 30 contacts D-ribose 5-phosphate. Lysine 87 functions as the Schiff-base intermediate with D-ribose 5-phosphate in the catalytic mechanism. Glycine 159 contacts D-ribose 5-phosphate. Arginine 171 provides a ligand contact to D-glyceraldehyde 3-phosphate. Residues glycine 257 and 278–279 (GS) each bind D-ribose 5-phosphate.

Belongs to the PdxS/SNZ family. In the presence of PdxT, forms a dodecamer of heterodimers.

The enzyme catalyses aldehydo-D-ribose 5-phosphate + D-glyceraldehyde 3-phosphate + L-glutamine = pyridoxal 5'-phosphate + L-glutamate + phosphate + 3 H2O + H(+). It functions in the pathway cofactor biosynthesis; pyridoxal 5'-phosphate biosynthesis. Its function is as follows. Catalyzes the formation of pyridoxal 5'-phosphate from ribose 5-phosphate (RBP), glyceraldehyde 3-phosphate (G3P) and ammonia. The ammonia is provided by the PdxT subunit. Can also use ribulose 5-phosphate and dihydroxyacetone phosphate as substrates, resulting from enzyme-catalyzed isomerization of RBP and G3P, respectively. This is Pyridoxal 5'-phosphate synthase subunit PdxS from Pyrococcus furiosus (strain ATCC 43587 / DSM 3638 / JCM 8422 / Vc1).